The chain runs to 346 residues: Short-wave-sensitive opsin 1 (346 aa).

Over 1 to 31 (MSGEDDFYLFQNISSVGPWDGPQYHLAPVWA) the chain is Extracellular. A glycan (N-linked (GlcNAc...) asparagine) is linked at asparagine 12. The chain crosses the membrane as a helical span at residues 32-56 (FRLQAAFMGFVFFVGTPLNAIVLVA). Topologically, residues 57–68 (TLHYKKLRQPLN) are cytoplasmic. The chain crosses the membrane as a helical span at residues 69-94 (YILVNVSLGGFLFCIFSVFTVFIASC). Topologically, residues 95–108 (HGYFLFGRHVCALE) are extracellular. An intrachain disulfide couples cysteine 105 to cysteine 182. The chain crosses the membrane as a helical span at residues 109–128 (AFLGSVAGLVTGWSLAFLAF). Topologically, residues 129–147 (ERYVVICKPFGSIRFNSKH) are cytoplasmic. Residues 148–171 (ALMVVLATWIIGIGVSIPPFFGWS) form a helical membrane-spanning segment. Over 172–197 (RFIPEGLQCSCGPDWYTVGTKYRSEY) the chain is Extracellular. Residues 198–225 (YTWFLFIFCFIIPLSLICFSYSQLLRTL) form a helical membrane-spanning segment. The Cytoplasmic portion of the chain corresponds to 226-247 (RAVAAQQQESATTQKAEREVSH). The helical transmembrane segment at 248–271 (MVVVMVGSFCLCYVPYAALAMYMV) threads the bilayer. Residues 272–279 (NNRNHGLD) lie on the Extracellular side of the membrane. Residues 280–304 (LRLVTIPAFFSKSSCVYNPIIYCFM) traverse the membrane as a helical segment. Lysine 291 bears the N6-(retinylidene)lysine mark. At 305–346 (NKQFRACILEMVCRKPMADESDVSGSQKTEVSTVSSSKVGPH) the chain is on the cytoplasmic side. Residues 324–346 (ESDVSGSQKTEVSTVSSSKVGPH) are disordered. Positions 330 to 346 (SQKTEVSTVSSSKVGPH) are enriched in low complexity.

It belongs to the G-protein coupled receptor 1 family. Opsin subfamily. Phosphorylated on some or all of the serine and threonine residues present in the C-terminal region. As to expression, expressed in the inner and outer segments of cone photoreceptor cells in the retina (at protein level).

Its subcellular location is the cell membrane. It is found in the photoreceptor inner segment. The protein resides in the cell projection. The protein localises to the cilium. It localises to the photoreceptor outer segment. Its subcellular location is the cytoplasm. It is found in the perinuclear region. In terms of biological role, visual pigments are the light-absorbing molecules that mediate vision. They consist of an apoprotein, opsin, covalently linked to cis-retinal. Required for the maintenance of cone outer segment organization in the ventral retina, but not essential for the maintenance of functioning cone photoreceptors. Involved in ensuring correct abundance and localization of retinal membrane proteins. May increase spectral sensitivity in dim light. The protein is Short-wave-sensitive opsin 1 (Opn1sw) of Mus musculus (Mouse).